The primary structure comprises 420 residues: Gamma-glutamyl phosphate reductase (420 aa).

Belongs to the gamma-glutamyl phosphate reductase family.

It is found in the cytoplasm. It carries out the reaction L-glutamate 5-semialdehyde + phosphate + NADP(+) = L-glutamyl 5-phosphate + NADPH + H(+). The protein operates within amino-acid biosynthesis; L-proline biosynthesis; L-glutamate 5-semialdehyde from L-glutamate: step 2/2. Catalyzes the NADPH-dependent reduction of L-glutamate 5-phosphate into L-glutamate 5-semialdehyde and phosphate. The product spontaneously undergoes cyclization to form 1-pyrroline-5-carboxylate. The chain is Gamma-glutamyl phosphate reductase from Neisseria meningitidis serogroup B (strain ATCC BAA-335 / MC58).